We begin with the raw amino-acid sequence, 365 residues long: Galactoside alpha-(1,2)-fucosyltransferase 1 (365 aa).

Residues 1-8 are Cytoplasmic-facing; sequence MWLRSHRQ. A helical; Signal-anchor for type II membrane protein membrane pass occupies residues 9–25; that stretch reads LCLAFLLVCVLSVIFFL. The Lumenal segment spans residues 26-365; the sequence is HIHQDSFPHG…LSPLWTLAKP (340 aa). N65 and N327 each carry an N-linked (GlcNAc...) asparagine glycan.

The protein belongs to the glycosyltransferase 11 family.

Its subcellular location is the golgi apparatus. The protein localises to the golgi stack membrane. The catalysed reaction is a beta-D-galactosyl-(1-&gt;4)-N-acetyl-beta-D-glucosaminyl derivative + GDP-beta-L-fucose = an alpha-L-Fuc-(1-&gt;2)-beta-D-Gal-(1-&gt;4)-beta-D-GlcNAc derivative + GDP + H(+). It carries out the reaction a ganglioside GA1 + GDP-beta-L-fucose = a ganglioside Fuc-GA1 + GDP + H(+). The enzyme catalyses a beta-D-Gal-(1-&gt;3)-beta-D-GlcNAc-(1-&gt;3)-beta-D-Gal-(1-&gt;4)-beta-D-Glc-(1&lt;-&gt;1')-Cer(d18:1(4E)) + GDP-beta-L-fucose = alpha-L-fucosyl-(1-&gt;2)- beta-D-galactosyl-(1-&gt;3)-N-acetyl-beta-D-glucosaminyl-(1-&gt;3)-beta-D-galactosyl-(1-&gt;4)-beta-D-glucosyl-(1&lt;-&gt;1')-N-acylsphing-4-enine + GDP + H(+). It catalyses the reaction a neolactoside nLc4Cer(d18:1(4E)) + GDP-beta-L-fucose = a neolactoside IV(2)-alpha-Fuc-nLc4Cer(d18:1(4E)) + GDP + H(+). The catalysed reaction is a ganglioside GM1 + GDP-beta-L-fucose = a ganglioside Fuc-GM1 + GDP + H(+). It carries out the reaction beta-D-galactosyl-(1-&gt;3)-N-acetyl-D-galactosamine + GDP-beta-L-fucose = alpha-L-fucosyl-(1-&gt;2)-beta-D-galactosyl-(1-&gt;3)-N-acetyl-D-galactosamine + GDP + H(+). It participates in protein modification; protein glycosylation. In terms of biological role, catalyzes the transfer of L-fucose, from a guanosine diphosphate-beta-L-fucose, to the terminal galactose residue of glycoconjugates through an alpha(1,2) linkage leading to H antigen synthesis that is an intermediate substrate in the synthesis of ABO blood group antigens. H antigen is essential for maturation of the glomerular layer of the main olfactory bulb, in cell migration and early cell-cell contacts during tumor associated angiogenesis. Preferentially fucosylates soluble lactose and to a lesser extent fucosylates glycolipids gangliosides GA1 and GM1a. This chain is Galactoside alpha-(1,2)-fucosyltransferase 1, found in Homo sapiens (Human).